Reading from the N-terminus, the 187-residue chain is UPF0301 protein WIGBR1650 (187 aa).

This sequence belongs to the UPF0301 (AlgH) family.

This chain is UPF0301 protein WIGBR1650, found in Wigglesworthia glossinidia brevipalpis.